Consider the following 136-residue polypeptide: Nucleoside diphosphate kinase (136 aa).

The ATP site is built by Lys-10, Phe-58, Arg-86, Thr-92, Arg-104, and Asn-114. His-117 serves as the catalytic Pros-phosphohistidine intermediate.

Belongs to the NDK family. In terms of assembly, homotetramer. It depends on Mg(2+) as a cofactor.

Its subcellular location is the cytoplasm. It catalyses the reaction a 2'-deoxyribonucleoside 5'-diphosphate + ATP = a 2'-deoxyribonucleoside 5'-triphosphate + ADP. It carries out the reaction a ribonucleoside 5'-diphosphate + ATP = a ribonucleoside 5'-triphosphate + ADP. In terms of biological role, major role in the synthesis of nucleoside triphosphates other than ATP. The ATP gamma phosphate is transferred to the NDP beta phosphate via a ping-pong mechanism, using a phosphorylated active-site intermediate. The chain is Nucleoside diphosphate kinase from Mycolicibacterium vanbaalenii (strain DSM 7251 / JCM 13017 / BCRC 16820 / KCTC 9966 / NRRL B-24157 / PYR-1) (Mycobacterium vanbaalenii).